The primary structure comprises 369 residues: UDP-N-acetylglucosamine--N-acetylmuramyl-(pentapeptide) pyrophosphoryl-undecaprenol N-acetylglucosamine transferase (369 aa).

UDP-N-acetyl-alpha-D-glucosamine-binding positions include 10–12, Asn-124, Arg-166, Ser-196, Ile-251, and Gln-296; that span reads TAG.

Belongs to the glycosyltransferase 28 family. MurG subfamily.

Its subcellular location is the cell membrane. It carries out the reaction di-trans,octa-cis-undecaprenyl diphospho-N-acetyl-alpha-D-muramoyl-L-alanyl-D-glutamyl-meso-2,6-diaminopimeloyl-D-alanyl-D-alanine + UDP-N-acetyl-alpha-D-glucosamine = di-trans,octa-cis-undecaprenyl diphospho-[N-acetyl-alpha-D-glucosaminyl-(1-&gt;4)]-N-acetyl-alpha-D-muramoyl-L-alanyl-D-glutamyl-meso-2,6-diaminopimeloyl-D-alanyl-D-alanine + UDP + H(+). Its pathway is cell wall biogenesis; peptidoglycan biosynthesis. Cell wall formation. Catalyzes the transfer of a GlcNAc subunit on undecaprenyl-pyrophosphoryl-MurNAc-pentapeptide (lipid intermediate I) to form undecaprenyl-pyrophosphoryl-MurNAc-(pentapeptide)GlcNAc (lipid intermediate II). This is UDP-N-acetylglucosamine--N-acetylmuramyl-(pentapeptide) pyrophosphoryl-undecaprenol N-acetylglucosamine transferase from Acetivibrio thermocellus (strain ATCC 27405 / DSM 1237 / JCM 9322 / NBRC 103400 / NCIMB 10682 / NRRL B-4536 / VPI 7372) (Clostridium thermocellum).